A 495-amino-acid chain; its full sequence is RNA-binding KH domain-containing protein PEPPER (495 aa).

KH domains follow at residues 73–140 (DCVF…MDAV), 165–234 (FSSV…LEAI), and 340–403 (QVSQ…EQLI). The disordered stretch occupies residues 474–495 (GQTYGSEYRPASDVGGYSSYNL).

Interacts with HUA1 and HEN4. In terms of tissue distribution, detected in roots, shoots, leaves, flowers and fruits.

It is found in the nucleus. Functionally, regulates vegetative and gynoecium development. In concert with HUA2, antagonizes FLK by positively regulating FLC probably at transcriptional and post-transcriptional levels, and thus acts as a negative regulator of flowering. The chain is RNA-binding KH domain-containing protein PEPPER from Arabidopsis thaliana (Mouse-ear cress).